A 518-amino-acid polypeptide reads, in one-letter code: MPSISPASDADRALVIGSGLGGLAAAMRLGAKGWRVTVIDKLDVPGGRGSSITQEGHRFDLGPTIVTVPQSLRDLWKTCGRDFDADVELKPIDPFYEVRWPDGSHFTVRQSTEAMKAEVARLSPGDVAGYEKFLKDSEKRYWFGYEDLGRRSMHKLWDLIKVLPTFGMMRADRSVYQHAALRVKDERLRMALSFHPLFIGGDPFNVTSMYILVSQLEKEFGVHYAIGGVAAIAAAMAKVIEGQGGSFRMNTEVDEILVEKGTATGVRLASGEVLRAGLVVSNADAGHTYMRLLRNHPRRRWTDAHVKSRRWSMGLFVWYFGTKGTKGMWPDVGHHTIVNAPRYKGLVEDIFLKGKLAKDMSLYIHRPSITDPTVAPEGDDTFYALSPVPHLKQAQPVDWQAVAEPYRESVLEVLEQSMPGIGERIGPSLVFTPETFRDRYLSPWGAGFSIEPRILQSAWFRPHNISEEVANLFLVGAGTHPGAGVPGVIGSAEVMAKLAPDAPRARREAEPAERLAAE.

Position 14 to 47 (14 to 47 (LVIGSGLGGLAAAMRLGAKGWRVTVIDKLDVPGG)) interacts with FAD.

This sequence belongs to the carotenoid/retinoid oxidoreductase family. FAD is required as a cofactor.

The catalysed reaction is 15-cis-phytoene + 3 A = all-trans-neurosporene + 3 AH2. Its pathway is carotenoid biosynthesis. Functionally, converts phytoene into all-trans-neurosporene as the major product, via the intermediary of phytofluene and zeta-carotene, by the introduction of three double bonds. The sequence is that of Phytoene desaturase (neurosporene-forming) (crtI) from Cereibacter sphaeroides (strain ATCC 17023 / DSM 158 / JCM 6121 / CCUG 31486 / LMG 2827 / NBRC 12203 / NCIMB 8253 / ATH 2.4.1.) (Rhodobacter sphaeroides).